An 805-amino-acid chain; its full sequence is Leucine--tRNA ligase (805 aa).

Residues 40–51 carry the 'HIGH' region motif; that stretch reads PYPSGQGLHVGH. A 'KMSKS' region motif is present at residues 576-580; it reads KMSKS. K579 is a binding site for ATP.

This sequence belongs to the class-I aminoacyl-tRNA synthetase family.

The protein resides in the cytoplasm. It catalyses the reaction tRNA(Leu) + L-leucine + ATP = L-leucyl-tRNA(Leu) + AMP + diphosphate. In Ligilactobacillus salivarius (strain UCC118) (Lactobacillus salivarius), this protein is Leucine--tRNA ligase.